Consider the following 103-residue polypeptide: Large ribosomal subunit protein bL21 (103 aa).

The protein belongs to the bacterial ribosomal protein bL21 family. As to quaternary structure, part of the 50S ribosomal subunit. Contacts protein L20.

Its function is as follows. This protein binds to 23S rRNA in the presence of protein L20. This Caldicellulosiruptor saccharolyticus (strain ATCC 43494 / DSM 8903 / Tp8T 6331) protein is Large ribosomal subunit protein bL21.